A 505-amino-acid chain; its full sequence is Keratin, type II cuticular Hb1 (505 aa).

The interval 1-106 is head; the sequence is MTCGSGFGGR…PNAQCVKQEE (106 aa). The IF rod domain maps to 106–417; the sequence is EKEQIKSLNS…RLLEGEEQRL (312 aa). Residues 107-141 form a coil 1A region; the sequence is KEQIKSLNSRFAAFIDKVRFLEQQNKLLETKLQFY. The linker 1 stretch occupies residues 142-151; it reads QNRECCQSNL. Residues 152–252 form a coil 1B region; sequence EPLFEGYIET…YEEEILILQS (101 aa). A Glycyl lysine isopeptide (Lys-Gly) (interchain with G-Cter in SUMO1) cross-link involves residue lysine 212. The interval 253 to 269 is linker 12; that stretch reads HISDTSVVVKLDNSRDL. The coil 2 stretch occupies residues 270–413; the sequence is NMDCIIAEIK…ATYRRLLEGE (144 aa). The interval 414–505 is tail; it reads EQRLCEGIGA…GSCGSSCRKC (92 aa).

Belongs to the intermediate filament family. Heterotetramer of two type I and two type II keratins. In terms of tissue distribution, abundantly expressed in the differentiating cortex of growing (anagen) hair. Expression is restricted to the keratinocytes of the hair cortex and is absent from inner root sheath and medulla. Expressed in malignant lymph node tissue in breast carcinoma tissue.

This Homo sapiens (Human) protein is Keratin, type II cuticular Hb1 (KRT81).